A 341-amino-acid chain; its full sequence is Phosphoribosylaminoimidazole-succinocarboxamide synthase, chloroplastic (341 aa).

The protein belongs to the SAICAR synthetase family.

The protein resides in the plastid. Its subcellular location is the chloroplast. The enzyme catalyses 5-amino-1-(5-phospho-D-ribosyl)imidazole-4-carboxylate + L-aspartate + ATP = (2S)-2-[5-amino-1-(5-phospho-beta-D-ribosyl)imidazole-4-carboxamido]succinate + ADP + phosphate + 2 H(+). It participates in purine metabolism; IMP biosynthesis via de novo pathway; 5-amino-1-(5-phospho-D-ribosyl)imidazole-4-carboxamide from 5-amino-1-(5-phospho-D-ribosyl)imidazole-4-carboxylate: step 1/2. In Vigna aconitifolia (Moth bean), this protein is Phosphoribosylaminoimidazole-succinocarboxamide synthase, chloroplastic (PUR7).